Here is a 212-residue protein sequence, read N- to C-terminus: Regulatory protein RecX (212 aa).

The protein belongs to the RecX family.

The protein localises to the cytoplasm. Functionally, modulates RecA activity. This is Regulatory protein RecX from Clostridioides difficile (strain 630) (Peptoclostridium difficile).